A 339-amino-acid polypeptide reads, in one-letter code: Ketol-acid reductoisomerase (NADP(+)) (339 aa).

The KARI N-terminal Rossmann domain occupies 1–182 (MPNRYYEKDG…GCLKAGVIDT (182 aa)). NADP(+) contacts are provided by residues 25-28 (YGSQ), Ser51, Ser53, and 83-86 (DHIQ). The active site involves His108. Gly134 is a binding site for NADP(+). Positions 183 to 328 (NFREETESDL…RELREMMTFL (146 aa)) constitute a KARI C-terminal knotted domain. Asp191, Glu195, Glu227, and Glu231 together coordinate Mg(2+). Ser252 contacts substrate.

It belongs to the ketol-acid reductoisomerase family. Requires Mg(2+) as cofactor.

It catalyses the reaction (2R)-2,3-dihydroxy-3-methylbutanoate + NADP(+) = (2S)-2-acetolactate + NADPH + H(+). It carries out the reaction (2R,3R)-2,3-dihydroxy-3-methylpentanoate + NADP(+) = (S)-2-ethyl-2-hydroxy-3-oxobutanoate + NADPH + H(+). Its pathway is amino-acid biosynthesis; L-isoleucine biosynthesis; L-isoleucine from 2-oxobutanoate: step 2/4. It participates in amino-acid biosynthesis; L-valine biosynthesis; L-valine from pyruvate: step 2/4. Its function is as follows. Involved in the biosynthesis of branched-chain amino acids (BCAA). Catalyzes an alkyl-migration followed by a ketol-acid reduction of (S)-2-acetolactate (S2AL) to yield (R)-2,3-dihydroxy-isovalerate. In the isomerase reaction, S2AL is rearranged via a Mg-dependent methyl migration to produce 3-hydroxy-3-methyl-2-ketobutyrate (HMKB). In the reductase reaction, this 2-ketoacid undergoes a metal-dependent reduction by NADPH to yield (R)-2,3-dihydroxy-isovalerate. This chain is Ketol-acid reductoisomerase (NADP(+)), found in Solibacter usitatus (strain Ellin6076).